Here is an 899-residue protein sequence, read N- to C-terminus: Proline-rich transmembrane protein 4 (899 aa).

A signal peptide spans 1 to 23 (MARHGCLGLGLFCCVLFAATVGP). 2 disordered regions span residues 110 to 152 (LTEW…RRST) and 295 to 340 (TVPI…PEAP). The next 5 membrane-spanning stretches (helical) occupy residues 370 to 390 (VGAL…LLPW), 392 to 412 (CPPG…AGTT), 430 to 450 (ALAW…GLGL), 467 to 487 (LAAL…GSAA), and 500 to 520 (GLHA…SCWG). The residue at position 641 (S641) is a Phosphoserine. Disordered regions lie at residues 769–797 (TGGR…AWPA) and 839–869 (PSGS…ASEL). Low complexity predominate over residues 840–851 (SGSSPSLPASGS).

It is found in the membrane. The chain is Proline-rich transmembrane protein 4 (PRRT4) from Homo sapiens (Human).